A 362-amino-acid polypeptide reads, in one-letter code: D-alanine--D-alanine ligase (362 aa).

Residues 141–346 (KNIFAEAGLN…YPELIEELIR (206 aa)) enclose the ATP-grasp domain. 174 to 229 (EEALGYPCFVKPANLGSSVGINKCKDREELEKAFEEAFQFDRKIIVEENIIGREVE) provides a ligand contact to ATP. Mg(2+)-binding residues include D300, E313, and N315.

It belongs to the D-alanine--D-alanine ligase family. Requires Mg(2+) as cofactor. The cofactor is Mn(2+).

The protein resides in the cytoplasm. The catalysed reaction is 2 D-alanine + ATP = D-alanyl-D-alanine + ADP + phosphate + H(+). It functions in the pathway cell wall biogenesis; peptidoglycan biosynthesis. In terms of biological role, cell wall formation. The polypeptide is D-alanine--D-alanine ligase (Bacillus cytotoxicus (strain DSM 22905 / CIP 110041 / 391-98 / NVH 391-98)).